We begin with the raw amino-acid sequence, 396 residues long: Tryptophan synthase beta chain (396 aa).

Lys86 bears the N6-(pyridoxal phosphate)lysine mark.

Belongs to the TrpB family. Tetramer of two alpha and two beta chains. Requires pyridoxal 5'-phosphate as cofactor.

It catalyses the reaction (1S,2R)-1-C-(indol-3-yl)glycerol 3-phosphate + L-serine = D-glyceraldehyde 3-phosphate + L-tryptophan + H2O. Its pathway is amino-acid biosynthesis; L-tryptophan biosynthesis; L-tryptophan from chorismate: step 5/5. In terms of biological role, the beta subunit is responsible for the synthesis of L-tryptophan from indole and L-serine. This is Tryptophan synthase beta chain from Francisella tularensis subsp. tularensis (strain FSC 198).